Consider the following 409-residue polypeptide: Protein naked cuticle homolog 2 (409 aa).

A lipid anchor (N-myristoyl glycine) is attached at G2. Residues 109 to 144 (AEDNRQEWVFTLYDFDNSGKVTKEDMSSLMHTIYDV) form the EF-hand domain. Ca(2+) is bound by residues D122, D124, S126, K128, and D133. 4 disordered regions span residues 160–224 (LRVK…YCVD), 243–315 (TSRF…RYPG), 346–366 (SHTHAHTPSGLQHSHSRRIRS), and 388–409 (RHEHHHHHEHHHHHHYHHYHQT). 2 stretches are compositionally biased toward basic and acidic residues: residues 171-185 (AARRRDATHTERETS) and 193-224 (VRSEEHRSADRRQSTHIRGQTEAHEGNHYCVD). Low complexity predominate over residues 247-268 (DSSSPDADQDPPSRSSHSQSRP). The segment covering 389-409 (HEHHHHHEHHHHHHYHHYHQT) has biased composition (basic residues).

This sequence belongs to the NKD family. As to expression, expressed ubiquitously until 1 dpf, when expression becomes confined to the anterior CNS, with slight expression in the developing tail.

It localises to the cell membrane. The protein localises to the cytoplasm. Its function is as follows. Cell autonomous antagonist of both the canonical and non-canonical Wnt signaling pathways. The polypeptide is Protein naked cuticle homolog 2 (nkd2) (Danio rerio (Zebrafish)).